Here is a 233-residue protein sequence, read N- to C-terminus: MKVAIVAGTPGAGKTSVLIHTIRTLINEGYKPVVVKIDCLYTDDDVRYKKLGIPVLVGLSKDMCPDHFAIYNFEEMVDWAKDKGDILLIETAGLCHRCAPYTKNSLGICVIDATSGPNTPRKVGPFLTSADIVVITKGDIISQAEREVFRERVLEMNPNCRIYEVNGLTGQGCVEIAKEIIESKDIKDLENEELRHNAPLCICTLCVGETRVSKKYHRGILRRIDGFMEYEGE.

This is an uncharacterized protein from Methanocaldococcus jannaschii (strain ATCC 43067 / DSM 2661 / JAL-1 / JCM 10045 / NBRC 100440) (Methanococcus jannaschii).